Here is a 1069-residue protein sequence, read N- to C-terminus: Kinesin-like protein vab-8 (1069 aa).

In terms of domain architecture, Kinesin motor spans 15–325 (PLRTIPKLRL…ACKIARTRVK (311 aa)). Disordered stretches follow at residues 328-374 (MGHG…LESG), 391-436 (SRTT…KSSP), and 572-598 (EQEE…RILS). Interaction with unc-51 regions lie at residues 331–517 (GRKP…KSKY) and 517–719 (YNLD…TVVD). Low complexity-rich tracts occupy residues 339–364 (SSGT…GTPR) and 391–407 (SRTT…TPTS). Residues 403–877 (STPTSIRPLH…SAERDRKTSK (475 aa)) form an interaction with unc-73 region. Residues 719-769 (DWSQIERKKEREKDAMEEEKRKEVLRERRAKLKITELEIKRERNMIDKELD) adopt a coiled-coil conformation. The disordered stretch occupies residues 786-960 (SLSPCRGGRT…RQSYSASSGY (175 aa)). The segment covering 824–847 (GGSLAKLSASGASGSGPPSSPSLG) has biased composition (low complexity). The span at 883 to 897 (SSKERRSSGSKEELQ) shows a compositional bias: basic and acidic residues. The segment covering 906-928 (TSPKTYGGPGTSSSGRGSSAPGS) has biased composition (low complexity). Residues 938 to 960 (TEKTANGTMPRSKRQSYSASSGY) show a composition bias toward polar residues. The stretch at 990–1027 (LVRQADEIRHRQWQLKKELEEAKRAIGQEEDAKMIANS) forms a coiled coil.

It belongs to the TRAFAC class myosin-kinesin ATPase superfamily. Kinesin family. KIF26 subfamily. As to quaternary structure, interacts with unc-51 and unc-73. Phosphorylated by unc-51.

Its subcellular location is the cytoplasm. It localises to the cytoskeleton. Functionally, required for posterior migration of cells and axon growth cones during nervous system assembly. In PLM neuron, regulates innexin unc-9 gap junction turnover by suppressing unc-9 transport out of the gap junctions. This chain is Kinesin-like protein vab-8 (vab-8), found in Caenorhabditis briggsae.